A 242-amino-acid chain; its full sequence is Small ribosomal subunit protein uS2 (242 aa).

Belongs to the universal ribosomal protein uS2 family.

This chain is Small ribosomal subunit protein uS2, found in Aliivibrio fischeri (strain ATCC 700601 / ES114) (Vibrio fischeri).